The following is a 269-amino-acid chain: Hydroxyethylthiazole kinase (269 aa).

Position 45 (M45) interacts with substrate. Residues R121 and T167 each contribute to the ATP site. A substrate-binding site is contributed by G194.

This sequence belongs to the Thz kinase family. It depends on Mg(2+) as a cofactor.

The enzyme catalyses 5-(2-hydroxyethyl)-4-methylthiazole + ATP = 4-methyl-5-(2-phosphooxyethyl)-thiazole + ADP + H(+). The protein operates within cofactor biosynthesis; thiamine diphosphate biosynthesis; 4-methyl-5-(2-phosphoethyl)-thiazole from 5-(2-hydroxyethyl)-4-methylthiazole: step 1/1. Catalyzes the phosphorylation of the hydroxyl group of 4-methyl-5-beta-hydroxyethylthiazole (THZ). This is Hydroxyethylthiazole kinase from Brevibacillus brevis (strain 47 / JCM 6285 / NBRC 100599).